The following is a 157-amino-acid chain: MPRRREVPKREILPDPKYGNVELSKFMNVIMEGGKKAVAERIIYGALDFIEKKNPDKDPLEAFTVAINNVKPMVEVKSRRVGGANYQVPVEVRPVRRLALSMRWIKEAARKRGEKSMALRLANELMEATEGRGGAMKKRDEVHRMAEANRAFSHFRF.

The protein belongs to the universal ribosomal protein uS7 family. As to quaternary structure, part of the 30S ribosomal subunit. Contacts proteins S9 and S11.

Functionally, one of the primary rRNA binding proteins, it binds directly to 16S rRNA where it nucleates assembly of the head domain of the 30S subunit. Is located at the subunit interface close to the decoding center, probably blocks exit of the E-site tRNA. This chain is Small ribosomal subunit protein uS7, found in Variovorax paradoxus (strain S110).